Reading from the N-terminus, the 262-residue chain is Small ribosomal subunit protein eS1 (262 aa).

Residues 1-18 are compositionally biased toward basic residues; that stretch reads MAVGKNKRISKGKKGSKK. Positions 1–20 are disordered; it reads MAVGKNKRISKGKKGSKKKT.

Belongs to the eukaryotic ribosomal protein eS1 family. In terms of assembly, component of the small ribosomal subunit. Mature ribosomes consist of a small (40S) and a large (60S) subunit. The 40S subunit contains about 33 different proteins and 1 molecule of RNA (18S). The 60S subunit contains about 49 different proteins and 3 molecules of RNA (25S, 5.8S and 5S).

The protein resides in the cytoplasm. This chain is Small ribosomal subunit protein eS1, found in Oryza sativa subsp. japonica (Rice).